The chain runs to 169 residues: Aspartic protease inhibitor 3 (169 aa).

A glycan (N-linked (GlcNAc...) asparagine) is linked at asparagine 1. Intrachain disulfides connect cysteine 30–cysteine 75 and cysteine 124–cysteine 134.

It belongs to the protease inhibitor I3 (leguminous Kunitz-type inhibitor) family.

The protein resides in the vacuole. Its function is as follows. Inhibitor of cathepsin D (aspartic protease). May also inhibit trypsin and chymotrypsin (serine proteases). Protects the plant by inhibiting proteases of invading organisms. The sequence is that of Aspartic protease inhibitor 3 from Solanum tuberosum (Potato).